Reading from the N-terminus, the 1686-residue chain is Thrombospondin type-1 domain-containing protein 7A (1686 aa).

The first 36 residues, 1–36 (MGLASRAPGKGGTSAGALASLFRVALLFFGLWDVQT), serve as a signal peptide directing secretion. At 37 to 1635 (QTVANTRPTY…FGPDGKLKTW (1599 aa)) the chain is on the extracellular side. TSP type-1 domains follow at residues 44–103 (PTYI…RVCD), 107–181 (ELYD…IPCP), and 183–236 (DCVV…GKCE). N-linked (GlcNAc...) asparagine glycosylation occurs at asparagine 223. The segment at 257 to 321 (IRQARDTGEA…EKKRMRDPET (65 aa)) is disordered. Composition is skewed to basic and acidic residues over residues 259-272 (QARDTGEARVPKAE) and 294-321 (EKKELRESKGERVRERVKEKKRMRDPET). TSP type-1 domains lie at 385–441 (DCEV…SPQG), 448–535 (VVYN…IPCP), 537–596 (ECEV…PSCY), 656–717 (DCVL…HPCT), 718–797 (VYHW…LPCK), 799–859 (DCVV…SVCP), 860–932 (GYRW…LPCQ), 934–985 (DCQL…QYCP), 988–1061 (KYNA…IPCP), 1063–1123 (DCKL…SDCS), 1124–1191 (QYVW…LPCP), 1193–1247 (DCVL…SNCF), 1248–1311 (HYSY…VECP), 1313–1368 (NCQL…KPCF), 1369–1439 (SWRY…VPCP), and 1441–1502 (ECYL…GQCY). 3 disulfide bridges follow: cysteine 460/cysteine 530, cysteine 480/cysteine 534, and cysteine 491/cysteine 519. Residue asparagine 475 is glycosylated (N-linked (GlcNAc...) asparagine). A glycan (N-linked (GlcNAc...) asparagine) is linked at asparagine 525. 2 cysteine pairs are disulfide-bonded: cysteine 657–cysteine 699 and cysteine 668–cysteine 672. Residue asparagine 701 is glycosylated (N-linked (GlcNAc...) asparagine). 7 disulfide bridges follow: cysteine 711–cysteine 716, cysteine 729–cysteine 792, cysteine 756–cysteine 796, cysteine 767–cysteine 780, cysteine 800–cysteine 842, cysteine 811–cysteine 815, and cysteine 852–cysteine 858. A glycan (N-linked (GlcNAc...) asparagine) is linked at asparagine 739. N-linked (GlcNAc...) asparagine glycosylation is present at asparagine 996. Intrachain disulfides connect cysteine 1000/cysteine 1056, cysteine 1022/cysteine 1060, cysteine 1033/cysteine 1046, cysteine 1064/cysteine 1101, cysteine 1075/cysteine 1079, and cysteine 1118/cysteine 1122. An N-linked (GlcNAc...) asparagine glycan is attached at asparagine 1071. An N-linked (GlcNAc...) asparagine glycan is attached at asparagine 1212. Cysteine 1240 and cysteine 1246 are joined by a disulfide. Asparagine 1252 carries an N-linked (GlcNAc...) asparagine glycan. Disulfide bonds link cysteine 1259-cysteine 1306, cysteine 1267-cysteine 1310, cysteine 1278-cysteine 1291, cysteine 1314-cysteine 1352, cysteine 1325-cysteine 1329, cysteine 1362-cysteine 1367, cysteine 1378-cysteine 1434, cysteine 1385-cysteine 1438, cysteine 1396-cysteine 1415, cysteine 1442-cysteine 1486, cysteine 1453-cysteine 1457, and cysteine 1496-cysteine 1501. N-linked (GlcNAc...) asparagine glycosylation occurs at asparagine 1303. Asparagine 1393 carries an N-linked (GlcNAc...) asparagine glycan. Asparagine 1527 carries N-linked (GlcNAc...) asparagine glycosylation. The chain crosses the membrane as a helical span at residues 1636-1656 (VYGVAAGAFVLLVFIVSMTYL). Over 1657 to 1686 (ACKKPKKPQRRQMNNRLKPLTLAYDGDADM) the chain is Cytoplasmic.

In terms of processing, extensively N-glycosylated.

It localises to the cell membrane. The protein resides in the cell projection. Its function is as follows. Required for normal sprouting angiogenesis and normal embryonic development of intersegmental vessels (ISV). Required for normal function of the glomerular filtration barrier. Required for normal axon outgrowth on embryonic motor neurons at the level of the horizontal myoseptum. Required for normal expression of notch1b, suggesting that its functions in angiogenesis and neuron outgrowth are due to decreased expression of notch1b. Plays a role in actin cytoskeleton rearrangement. In Danio rerio (Zebrafish), this protein is Thrombospondin type-1 domain-containing protein 7A.